We begin with the raw amino-acid sequence, 429 residues long: Ribosomal RNA small subunit methyltransferase B (429 aa).

S-adenosyl-L-methionine-binding positions include 254 to 260 (CAAPGGK), aspartate 277, aspartate 303, and aspartate 322. Catalysis depends on cysteine 375, which acts as the Nucleophile.

The protein belongs to the class I-like SAM-binding methyltransferase superfamily. RsmB/NOP family.

The protein localises to the cytoplasm. The enzyme catalyses cytidine(967) in 16S rRNA + S-adenosyl-L-methionine = 5-methylcytidine(967) in 16S rRNA + S-adenosyl-L-homocysteine + H(+). Specifically methylates the cytosine at position 967 (m5C967) of 16S rRNA. This is Ribosomal RNA small subunit methyltransferase B from Shigella flexneri serotype 5b (strain 8401).